The primary structure comprises 269 residues: Tryptophan synthase alpha chain (269 aa).

Active-site proton acceptor residues include E49 and D60.

This sequence belongs to the TrpA family. As to quaternary structure, tetramer of two alpha and two beta chains.

It catalyses the reaction (1S,2R)-1-C-(indol-3-yl)glycerol 3-phosphate + L-serine = D-glyceraldehyde 3-phosphate + L-tryptophan + H2O. It functions in the pathway amino-acid biosynthesis; L-tryptophan biosynthesis; L-tryptophan from chorismate: step 5/5. The alpha subunit is responsible for the aldol cleavage of indoleglycerol phosphate to indole and glyceraldehyde 3-phosphate. This Cronobacter sakazakii (strain ATCC BAA-894) (Enterobacter sakazakii) protein is Tryptophan synthase alpha chain.